The chain runs to 346 residues: Putative cytochrome bd menaquinol oxidase subunit II (346 aa).

Helical transmembrane passes span 7–27, 63–83, 87–107, 119–139, 164–184, 201–221, 236–256, 269–289, and 312–332; these read ALIA…MATM, VFIV…TFVL, LLIP…FLVF, YISG…LPVT, AYSF…LLLA, KSAL…MVTM, FSWI…LFLP, LALV…GRAH, and ALFA…FFFW.

The protein belongs to the cytochrome ubiquinol oxidase subunit 2 family.

The protein resides in the cell membrane. May have a role in sporulation. Can compensate for the loss of cytochrome aa3. The protein is Putative cytochrome bd menaquinol oxidase subunit II (ythB) of Bacillus subtilis (strain 168).